We begin with the raw amino-acid sequence, 357 residues long: Membrane-bound lytic murein transglycosylase C (357 aa).

The N-terminal stretch at 1–15 (MKKYLLLALLPFLYA) is a signal peptide. C16 is lipidated: N-palmitoyl cysteine. C16 is lipidated: S-diacylglycerol cysteine.

Belongs to the transglycosylase Slt family.

It is found in the cell outer membrane. The catalysed reaction is Exolytic cleavage of the (1-&gt;4)-beta-glycosidic linkage between N-acetylmuramic acid (MurNAc) and N-acetylglucosamine (GlcNAc) residues in peptidoglycan, from either the reducing or the non-reducing ends of the peptidoglycan chains, with concomitant formation of a 1,6-anhydrobond in the MurNAc residue.. Functionally, murein-degrading enzyme. May play a role in recycling of muropeptides during cell elongation and/or cell division. The protein is Membrane-bound lytic murein transglycosylase C of Haemophilus influenzae (strain 86-028NP).